The following is a 1026-amino-acid chain: Multidrug resistance protein MdtC (1026 aa).

11 consecutive transmembrane segments (helical) span residues 15–35, 333–353, 360–380, 387–407, 431–451, 463–483, 528–548, 853–873, 897–917, 953–973, and 984–1004; these read ILIA…LPVA, EVEE…FLFL, LIPA…MYLC, LSLM…IVVL, VGFT…PLLL, FAVT…TLTP, LVGV…IAIP, LILI…LYES, LFNA…IGIV, PIMM…LSGG, and ITIV…TPVV.

It belongs to the resistance-nodulation-cell division (RND) (TC 2.A.6) family. MdtC subfamily. As to quaternary structure, part of a tripartite efflux system composed of MdtA, MdtB and MdtC. MdtC forms a heteromultimer with MdtB.

It is found in the cell inner membrane. The polypeptide is Multidrug resistance protein MdtC (Salmonella choleraesuis (strain SC-B67)).